A 511-amino-acid polypeptide reads, in one-letter code: GMP synthase [glutamine-hydrolyzing] (511 aa).

The 191-residue stretch at 3–193 folds into the Glutamine amidotransferase type-1 domain; sequence KILILDFGGQ…VYSICDVAGD (191 aa). The active-site Nucleophile is the cysteine 80. Active-site residues include histidine 167 and glutamate 169. Residues 194 to 384 enclose the GMPS ATP-PPase domain; it reads WEPKNIKLEK…LDIPYQNVYR (191 aa). 221–227 contributes to the ATP binding site; that stretch reads SGGVDSL.

As to quaternary structure, homodimer.

The catalysed reaction is XMP + L-glutamine + ATP + H2O = GMP + L-glutamate + AMP + diphosphate + 2 H(+). The protein operates within purine metabolism; GMP biosynthesis; GMP from XMP (L-Gln route): step 1/1. Functionally, catalyzes the synthesis of GMP from XMP. The polypeptide is GMP synthase [glutamine-hydrolyzing] (Malacoplasma penetrans (strain HF-2) (Mycoplasma penetrans)).